Reading from the N-terminus, the 502-residue chain is Probable cytosol aminopeptidase (502 aa).

Residues K269 and D274 each contribute to the Mn(2+) site. Residue K281 is part of the active site. D292, D351, and E353 together coordinate Mn(2+). R355 is a catalytic residue.

It belongs to the peptidase M17 family. Mn(2+) serves as cofactor.

It is found in the cytoplasm. The enzyme catalyses Release of an N-terminal amino acid, Xaa-|-Yaa-, in which Xaa is preferably Leu, but may be other amino acids including Pro although not Arg or Lys, and Yaa may be Pro. Amino acid amides and methyl esters are also readily hydrolyzed, but rates on arylamides are exceedingly low.. It carries out the reaction Release of an N-terminal amino acid, preferentially leucine, but not glutamic or aspartic acids.. In terms of biological role, presumably involved in the processing and regular turnover of intracellular proteins. Catalyzes the removal of unsubstituted N-terminal amino acids from various peptides. This is Probable cytosol aminopeptidase from Shewanella sediminis (strain HAW-EB3).